We begin with the raw amino-acid sequence, 542 residues long: uncharacterized protein (542 aa).

Low complexity predominate over residues A125–P138. 4 disordered regions span residues A125–N182, L194–S333, S390–I428, and S459–N487. Residues Q202–I213 are compositionally biased toward polar residues. Composition is skewed to low complexity over residues S228–N306, N314–S333, S390–N423, and S459–S479.

This is an uncharacterized protein from Dictyostelium discoideum (Social amoeba).